The primary structure comprises 178 residues: MESFHGTTILSVRRGEQVAMGGDGQVTLGHIVVKASARKVRRLYREQVLAGFAGATADAFTLFERFESKLEKHQGHLVRAAVELTRDWRTDRVLRRLEAMLAVADRSASLIITGNGDVLEPEYGIVAIGSGGAYAQAAARAMLQHTEQSPADIVKRSLEIAGDLCIYTNQSHTIETLE.

Residue Thr-7 is part of the active site. Residues Gly-162, Cys-165, and Thr-168 each contribute to the Na(+) site.

Belongs to the peptidase T1B family. HslV subfamily. A double ring-shaped homohexamer of HslV is capped on each side by a ring-shaped HslU homohexamer. The assembly of the HslU/HslV complex is dependent on binding of ATP.

It localises to the cytoplasm. The enzyme catalyses ATP-dependent cleavage of peptide bonds with broad specificity.. With respect to regulation, allosterically activated by HslU binding. Functionally, protease subunit of a proteasome-like degradation complex believed to be a general protein degrading machinery. This Leptothrix cholodnii (strain ATCC 51168 / LMG 8142 / SP-6) (Leptothrix discophora (strain SP-6)) protein is ATP-dependent protease subunit HslV.